Reading from the N-terminus, the 362-residue chain is Porin Omp2b (362 aa).

Positions 1–22 are cleaved as a signal peptide; sequence MNIKSLLLGSAAALVAASGAQA.

The protein belongs to the alphaproteobacteria porin family. Homotrimer.

The protein localises to the cell outer membrane. Forms passive diffusion pores that allow small molecular weight hydrophilic materials across the outer membrane. The chain is Porin Omp2b (omp2b) from Brucella suis biovar 1 (strain 1330).